Reading from the N-terminus, the 246-residue chain is Probable transcriptional regulatory protein PM0980 (246 aa).

The protein belongs to the TACO1 family.

The protein localises to the cytoplasm. This chain is Probable transcriptional regulatory protein PM0980, found in Pasteurella multocida (strain Pm70).